A 503-amino-acid chain; its full sequence is MTTINKNEFLLEMTGISKEFPGVKALDKVNLKVRPHSIHALMGENGAGKSTLLKCLFGIYEKNEGDIVFLGKSINFSSSKEALEAGVSMVHQELNQVLQRTVMDNIWLGRYPTKGFFVDQKKMYEETKKVFEELDIDIDPNVKVATLSVSQMQMLEIAKAFSYDAKIVIMDEPTSSLTEKEVNHLFKIIKKLKEKGCGIVYISHKMEEIFEICDEITILRDGIWVDTRPLEGLTMDQIIGMMVGRELTQRFPEKTNTPKETILAVKNLTALNQPSVNDVSFELRKGEILGIAGLVGAKRTDIVETLFGIRERSSGDIILHGKHLKNKDAHEAINNGFALVTEERRSTGIYSNLDITFNSLVANVEQYKEGFGLLSNRKMKSDTQWVIDAMSVKTPSHKTMIGSLSGGNQQKIIIGRWLLTGPEILMLDEPTRGIDVGAKFEIYQLILELANKDKGIIIISSEMPELLGITDRILVMSNGRAAGIVETKNTTQNEILSLASRYL.

ABC transporter domains are found at residues 11 to 246 (LEMT…VGRE) and 257 to 503 (TPKE…SRYL). 43–50 (GENGAGKS) serves as a coordination point for ATP.

It belongs to the ABC transporter superfamily. Galactose/methyl galactoside importer (TC 3.A.1.2.3) family. The complex is composed of one ATP-binding protein (MglA), two transmembrane proteins (MglC) and a solute-binding protein (MglB).

The protein localises to the cell inner membrane. The catalysed reaction is D-galactose(out) + ATP + H2O = D-galactose(in) + ADP + phosphate + H(+). The enzyme catalyses methyl beta-D-galactoside(out) + ATP + H2O = methyl beta-D-galactoside(in) + ADP + phosphate + H(+). In terms of biological role, part of the ABC transporter complex MglABC involved in galactose/methyl galactoside import. Responsible for energy coupling to the transport system. This Photobacterium profundum (strain SS9) protein is Galactose/methyl galactoside import ATP-binding protein MglA 2.